Here is a 367-residue protein sequence, read N- to C-terminus: Alanine racemase (367 aa).

Catalysis depends on Lys40, which acts as the Proton acceptor; specific for D-alanine. Residue Lys40 is modified to N6-(pyridoxal phosphate)lysine. Substrate is bound at residue Arg136. Catalysis depends on Tyr263, which acts as the Proton acceptor; specific for L-alanine. Residue Met310 participates in substrate binding.

Belongs to the alanine racemase family. Requires pyridoxal 5'-phosphate as cofactor.

The enzyme catalyses L-alanine = D-alanine. The protein operates within amino-acid biosynthesis; D-alanine biosynthesis; D-alanine from L-alanine: step 1/1. Functionally, catalyzes the interconversion of L-alanine and D-alanine. May also act on other amino acids. This Lactococcus lactis subsp. cremoris (strain SK11) protein is Alanine racemase (alr).